Here is an 876-residue protein sequence, read N- to C-terminus: Probable LRR receptor-like protein kinase At1g51890 (876 aa).

An N-terminal signal peptide occupies residues 1 to 19; that stretch reads MRFLSFLIFVFAVLGLVQA. Residues 20 to 500 are Extracellular-facing; that stretch reads QDQSGFISLD…TGKNSTNVVA (481 aa). Residues asparagine 45, asparagine 90, asparagine 138, asparagine 177, asparagine 251, asparagine 259, asparagine 284, asparagine 290, asparagine 327, asparagine 335, asparagine 397, asparagine 412, and asparagine 417 are each glycosylated (N-linked (GlcNAc...) asparagine). LRR repeat units lie at residues 407–430, 431–453, and 455–476; these read QIISLNLSGSNLSGTITSDISKLT, HLRELDLSNNDLSGDIPFVFSDM, and NLTLINLSGNKNLNRSVPETLQ. N-linked (GlcNAc...) asparagine glycosylation is found at asparagine 455, asparagine 460, asparagine 468, asparagine 481, and asparagine 494. Residues 501–521 form a helical membrane-spanning segment; it reads IAASVASVFAVLVILAIVFVV. Over 522–872 the chain is Cytoplasmic; sequence IRKKQRTNEA…FSPSSASDFS (351 aa). Residue threonine 561 is modified to Phosphothreonine. The region spanning 570 to 842 is the Protein kinase domain; sequence KNFERVLGKG…HVVMELNECL (273 aa). ATP-binding positions include 576–584 and lysine 597; that span reads LGKGGFGTV. A Phosphotyrosine modification is found at tyrosine 642. Aspartate 694 serves as the catalytic Proton acceptor. Phosphothreonine is present on residues threonine 729 and threonine 734. Tyrosine 742 is modified (phosphotyrosine).

Belongs to the protein kinase superfamily. Ser/Thr protein kinase family.

The protein localises to the cell membrane. It catalyses the reaction L-seryl-[protein] + ATP = O-phospho-L-seryl-[protein] + ADP + H(+). The catalysed reaction is L-threonyl-[protein] + ATP = O-phospho-L-threonyl-[protein] + ADP + H(+). This is Probable LRR receptor-like protein kinase At1g51890 from Arabidopsis thaliana (Mouse-ear cress).